The primary structure comprises 119 residues: Protein TusC (119 aa).

This sequence belongs to the DsrF/TusC family. In terms of assembly, heterohexamer, formed by a dimer of trimers. The hexameric TusBCD complex contains 2 copies each of TusB, TusC and TusD. The TusBCD complex interacts with TusE.

The protein resides in the cytoplasm. Functionally, part of a sulfur-relay system required for 2-thiolation of 5-methylaminomethyl-2-thiouridine (mnm(5)s(2)U) at tRNA wobble positions. In Escherichia coli O157:H7, this protein is Protein TusC.